We begin with the raw amino-acid sequence, 432 residues long: tRNA(Ile)-lysidine synthase (432 aa).

19 to 24 (STGIDS) is an ATP binding site.

This sequence belongs to the tRNA(Ile)-lysidine synthase family.

The protein localises to the cytoplasm. The enzyme catalyses cytidine(34) in tRNA(Ile2) + L-lysine + ATP = lysidine(34) in tRNA(Ile2) + AMP + diphosphate + H(+). Ligates lysine onto the cytidine present at position 34 of the AUA codon-specific tRNA(Ile) that contains the anticodon CAU, in an ATP-dependent manner. Cytidine is converted to lysidine, thus changing the amino acid specificity of the tRNA from methionine to isoleucine. The chain is tRNA(Ile)-lysidine synthase from Staphylococcus epidermidis (strain ATCC 35984 / DSM 28319 / BCRC 17069 / CCUG 31568 / BM 3577 / RP62A).